Reading from the N-terminus, the 211-residue chain is Leucyl/phenylalanyl-tRNA--protein transferase (211 aa).

This sequence belongs to the L/F-transferase family.

The protein localises to the cytoplasm. It carries out the reaction N-terminal L-lysyl-[protein] + L-leucyl-tRNA(Leu) = N-terminal L-leucyl-L-lysyl-[protein] + tRNA(Leu) + H(+). The catalysed reaction is N-terminal L-arginyl-[protein] + L-leucyl-tRNA(Leu) = N-terminal L-leucyl-L-arginyl-[protein] + tRNA(Leu) + H(+). It catalyses the reaction L-phenylalanyl-tRNA(Phe) + an N-terminal L-alpha-aminoacyl-[protein] = an N-terminal L-phenylalanyl-L-alpha-aminoacyl-[protein] + tRNA(Phe). In terms of biological role, functions in the N-end rule pathway of protein degradation where it conjugates Leu, Phe and, less efficiently, Met from aminoacyl-tRNAs to the N-termini of proteins containing an N-terminal arginine or lysine. This Flavobacterium psychrophilum (strain ATCC 49511 / DSM 21280 / CIP 103535 / JIP02/86) protein is Leucyl/phenylalanyl-tRNA--protein transferase.